A 121-amino-acid polypeptide reads, in one-letter code: Basic phospholipase A2 3 (121 aa).

7 disulfides stabilise this stretch: Cys26–Cys115, Cys28–Cys44, Cys43–Cys95, Cys49–Cys121, Cys50–Cys88, Cys57–Cys81, and Cys75–Cys86. Positions 27, 29, and 31 each coordinate Ca(2+). His47 is an active-site residue. Residue Asp48 coordinates Ca(2+). Residue Asp89 is part of the active site.

Belongs to the phospholipase A2 family. Group II subfamily. D49 sub-subfamily. Requires Ca(2+) as cofactor. Expressed by the venom gland.

The protein resides in the secreted. The enzyme catalyses a 1,2-diacyl-sn-glycero-3-phosphocholine + H2O = a 1-acyl-sn-glycero-3-phosphocholine + a fatty acid + H(+). Its function is as follows. PLA2 catalyzes the calcium-dependent hydrolysis of the 2-acyl groups in 3-sn-phosphoglycerides. In Daboia russelii (Russel's viper), this protein is Basic phospholipase A2 3.